Here is a 129-residue protein sequence, read N- to C-terminus: Fluoride-specific ion channel FluC (129 aa).

A run of 4 helical transmembrane segments spans residues L5–V25, A32–M52, L60–F80, and A99–I119. Residues G75 and T78 each coordinate Na(+).

It belongs to the fluoride channel Fluc/FEX (TC 1.A.43) family.

The protein localises to the cell inner membrane. The catalysed reaction is fluoride(in) = fluoride(out). With respect to regulation, na(+) is not transported, but it plays an essential structural role and its presence is essential for fluoride channel function. Its function is as follows. Fluoride-specific ion channel. Important for reducing fluoride concentration in the cell, thus reducing its toxicity. This Pelobacter propionicus (strain DSM 2379 / NBRC 103807 / OttBd1) protein is Fluoride-specific ion channel FluC.